The following is a 441-amino-acid chain: G2/mitotic-specific cyclin-2 (441 aa).

It belongs to the cyclin family. Cyclin AB subfamily. As to quaternary structure, interacts with the CDC2 and CDK2 protein kinases to form a serine/threonine kinase holoenzyme complex. The cyclin subunit imparts substrate specificity to the complex.

Essential for the control of the cell cycle at the G2/M (mitosis) transition. G2/M cyclins accumulate steadily during G2 and are abruptly destroyed at mitosis. This Antirrhinum majus (Garden snapdragon) protein is G2/mitotic-specific cyclin-2.